A 258-amino-acid chain; its full sequence is Granzyme A (258 aa).

Residues 1-26 form the signal peptide; it reads MNIPFPFSFPPAICLLLIPGVFPVSC. A propeptide spans 27-28 (activation peptide); that stretch reads EG. The region spanning 29–255 is the Peptidase S1 domain; that stretch reads IIGGNEVAPH…HLNWIKKTIA (227 aa). An intrachain disulfide couples Cys-52 to Cys-68. Active-site charge relay system residues include His-67 and Asp-112. Cystine bridges form between Cys-146-Cys-217, Cys-178-Cys-196, and Cys-207-Cys-230. The N-linked (GlcNAc...) asparagine glycan is linked to Asn-169. The active-site Charge relay system is the Ser-211.

It belongs to the peptidase S1 family. Granzyme subfamily. Homodimer; disulfide-linked. Interacts with APEX1.

The protein localises to the secreted. Its subcellular location is the cytoplasmic granule. The catalysed reaction is Hydrolysis of proteins, including fibronectin, type IV collagen and nucleolin. Preferential cleavage: -Arg-|-Xaa-, -Lys-|-Xaa- &gt;&gt; -Phe-|-Xaa- in small molecule substrates.. In terms of biological role, abundant protease in the cytosolic granules of cytotoxic T-cells and NK-cells which activates caspase-independent pyroptosis when delivered into the target cell through the immunological synapse. It cleaves after Lys or Arg. Cleaves APEX1 after 'Lys-31' and destroys its oxidative repair activity. Cleaves the nucleosome assembly protein SET after 'Lys-189', which disrupts its nucleosome assembly activity and allows the SET complex to translocate into the nucleus to nick and degrade the DNA. The sequence is that of Granzyme A (GZMA) from Bos taurus (Bovine).